A 506-amino-acid chain; its full sequence is MFSLQDICRKHLFLLPSSFDEYILQALGLYWEKHGSLQRIRKDAVFVQRNIVLSTNEALRIAASEGNERVIKLLLSWEGDFHYVIIGALEGDRYDLIHKYVSQIKDYHNILSLIQNANTFEKCHHLSNSNMWCLIQNAIKYNMLSILQKHKNCLTHEGENQELFEMACEEQKYDIVLWIGQTLMVNEPESIFDTALARIDFSLLTIGYRLLFDNKMSCIDIHDEEDLTSSLTEHLEKAAIKGCFFFMLETLKHGGNVNMAVLSKAVEYNHRKILDYFIRRQKCLSREEIEKLLLSGISNGASIKTLNLLLSYLNYSVKHIIRKIVQYVIKEGDFTIIVVLKRKKINLVEPVLSGFMDDYYSYCFIKQFIDEFDIRPEKIIKMAARKGKLNMIIEFFNEIYPHKDDLKTMFKFLKNLVYTMKHKKGKEVLIGLIHKIYQSIHLENKEMFNLLKFYVMYNANIQFIALCKDCFKLAGFKPFLLECLDIAIKRNYPDIIQNIKLLLKYE.

This sequence belongs to the asfivirus MGF 505 family.

Its function is as follows. Plays a role in virus cell tropism, and may be required for efficient virus replication in macrophages. The chain is Protein MGF 505-4R from Ornithodoros (relapsing fever ticks).